Reading from the N-terminus, the 194-residue chain is Holliday junction branch migration complex subunit RuvA (194 aa).

Residues 1–61 (MIASLSGLLE…EDSVSLYGFA (61 aa)) are domain I. A domain II region spans residues 62-136 (SVLECTVFEQ…GKLTSVPLEN (75 aa)). A flexible linker region spans residues 136-140 (NRKQE). Residues 141–194 (QAVDRSAEIVQALIGLGWQRQESAAAVESVLEKDQSLTMPEILRNALRYLAKQE) form a domain III region.

This sequence belongs to the RuvA family. In terms of assembly, homotetramer. Forms an RuvA(8)-RuvB(12)-Holliday junction (HJ) complex. HJ DNA is sandwiched between 2 RuvA tetramers; dsDNA enters through RuvA and exits via RuvB. An RuvB hexamer assembles on each DNA strand where it exits the tetramer. Each RuvB hexamer is contacted by two RuvA subunits (via domain III) on 2 adjacent RuvB subunits; this complex drives branch migration. In the full resolvosome a probable DNA-RuvA(4)-RuvB(12)-RuvC(2) complex forms which resolves the HJ.

Its subcellular location is the cytoplasm. Functionally, the RuvA-RuvB-RuvC complex processes Holliday junction (HJ) DNA during genetic recombination and DNA repair, while the RuvA-RuvB complex plays an important role in the rescue of blocked DNA replication forks via replication fork reversal (RFR). RuvA specifically binds to HJ cruciform DNA, conferring on it an open structure. The RuvB hexamer acts as an ATP-dependent pump, pulling dsDNA into and through the RuvAB complex. HJ branch migration allows RuvC to scan DNA until it finds its consensus sequence, where it cleaves and resolves the cruciform DNA. The protein is Holliday junction branch migration complex subunit RuvA of Tropheryma whipplei (strain Twist) (Whipple's bacillus).